Consider the following 44-residue polypeptide: Protein PsbN (44 aa).

A helical membrane pass occupies residues 6 to 26 (FFFTIFLWFFLLSITAYSIYV).

This sequence belongs to the PsbN family.

Its subcellular location is the plastid. The protein resides in the chloroplast thylakoid membrane. In terms of biological role, may play a role in photosystem I and II biogenesis. The sequence is that of Protein PsbN from Stigeoclonium helveticum (Green alga).